A 375-amino-acid chain; its full sequence is Alanine racemase, catabolic (375 aa).

The active-site Proton acceptor; specific for D-alanine is Lys-38. Position 38 is an N6-(pyridoxal phosphate)lysine (Lys-38). Catalysis depends on Tyr-269, which acts as the Proton acceptor; specific for L-alanine.

It belongs to the alanine racemase family. The cofactor is pyridoxal 5'-phosphate.

It catalyses the reaction L-alanine = D-alanine. It participates in amino-acid biosynthesis; D-alanine biosynthesis; D-alanine from L-alanine: step 1/1. This Schizosaccharomyces pombe (strain 972 / ATCC 24843) (Fission yeast) protein is Alanine racemase, catabolic (alr1).